Here is a 286-residue protein sequence, read N- to C-terminus: 4-hydroxybenzoate octaprenyltransferase (286 aa).

7 helical membrane passes run 22-42 (IGTLLLLWPTLWALYLAEKAM), 45-65 (LSVLAIFICGVFLMRSAGCVI), 98-118 (LFIVLVFCSFLLVLCLNLYTI), 143-163 (FFLGAAFGWSIPMAYGATIEA), 213-233 (IIALLQIITLIFLFSVGYLSQ), 238-255 (YFIVLAIAGLFFVYQCRL), and 266-286 (NAFLNNNYFGLTVFIAVLFGI).

Belongs to the UbiA prenyltransferase family. Mg(2+) serves as cofactor.

The protein resides in the cell inner membrane. It catalyses the reaction all-trans-octaprenyl diphosphate + 4-hydroxybenzoate = 4-hydroxy-3-(all-trans-octaprenyl)benzoate + diphosphate. It functions in the pathway cofactor biosynthesis; ubiquinone biosynthesis. Functionally, catalyzes the prenylation of para-hydroxybenzoate (PHB) with an all-trans polyprenyl group. Mediates the second step in the final reaction sequence of ubiquinone-8 (UQ-8) biosynthesis, which is the condensation of the polyisoprenoid side chain with PHB, generating the first membrane-bound Q intermediate 3-octaprenyl-4-hydroxybenzoate. The polypeptide is 4-hydroxybenzoate octaprenyltransferase (Histophilus somni (strain 129Pt) (Haemophilus somnus)).